A 224-amino-acid chain; its full sequence is Flagellar L-ring protein (224 aa).

Residues 1–15 (MRSLLFSLTALVLAG) form the signal peptide. Cysteine 16 carries N-palmitoyl cysteine lipidation. Cysteine 16 carries the S-diacylglycerol cysteine lipid modification.

Belongs to the FlgH family. As to quaternary structure, the basal body constitutes a major portion of the flagellar organelle and consists of four rings (L,P,S, and M) mounted on a central rod.

The protein resides in the cell outer membrane. It localises to the bacterial flagellum basal body. In terms of biological role, assembles around the rod to form the L-ring and probably protects the motor/basal body from shearing forces during rotation. The protein is Flagellar L-ring protein of Idiomarina loihiensis (strain ATCC BAA-735 / DSM 15497 / L2-TR).